The following is a 239-amino-acid chain: Tetraspanin-9 (239 aa).

Residues 1–13 are Cytoplasmic-facing; it reads MARGCLCCVKYMM. The chain crosses the membrane as a helical span at residues 14–34; sequence FLFNLLFWLSGCGLLGVGIWL. Topologically, residues 35-55 are extracellular; it reads SVSQGSFATFSPSFPSLSAAN. Residues 56 to 76 traverse the membrane as a helical segment; sequence LVITLGSVVMVTGFLGCLGAI. Residues 77 to 85 lie on the Cytoplasmic side of the membrane; the sequence is KENKCLLLS. The chain crosses the membrane as a helical span at residues 86–106; sequence FFIVLLIILLAELILLILFFV. The Extracellular segment spans residues 107 to 203; sequence YTEKVSENAK…VEEWLNDNKH (97 aa). N180 is a glycosylation site (N-linked (GlcNAc...) asparagine). Residues 204–224 form a helical membrane-spanning segment; sequence LLGTIAMCVLVLQLLGMAFSM. Residues 225–239 are Cytoplasmic-facing; sequence TLYQQIHRAGKKYDA.

It belongs to the tetraspanin (TM4SF) family.

Its subcellular location is the membrane. The sequence is that of Tetraspanin-9 (tspan9) from Danio rerio (Zebrafish).